A 375-amino-acid chain; its full sequence is Formate dehydrogenase (375 aa).

Ile94 and Asn120 together coordinate substrate. NAD(+)-binding positions include 175-176, Asp196, 231-235, Thr257, Asp283, 312-315, and Ser358; these read RI, PLHEK, and HMSG.

The protein belongs to the D-isomer specific 2-hydroxyacid dehydrogenase family. FDH subfamily. As to quaternary structure, homodimer.

It is found in the cytoplasm. The enzyme catalyses formate + NAD(+) = CO2 + NADH. Catalyzes the NAD(+)-dependent oxidation of formate to carbon dioxide. Formate oxidation is the final step in the methanol oxidation pathway in methylotrophic microorganisms. Has a role in the detoxification of exogenous formate in non-methylotrophic organisms. This chain is Formate dehydrogenase, found in Neurospora crassa (strain ATCC 24698 / 74-OR23-1A / CBS 708.71 / DSM 1257 / FGSC 987).